We begin with the raw amino-acid sequence, 321 residues long: MTTTVPKVFAFHEFAGVAEAVADHVIHAQNSALKKGKVSRSTQMSGTSLNGNGNTESKTMERVNSVRSNASSRGGSEDGATKKLKKEKERRFKIALSGGSLIQVLHEGLLKRDDVQWGKWDIYFADERLVPFSSSESNYGLAKRKIFDLIDTEKYGTPKIYHIDESLINDPQECADNYEKILIKGFAGRDSVKLPMFDLFLLGCAPDGHIASLFPNFQENLRENLAWVIPVENAPSGPSNRISLTIPVICHSHRVTFVVEGATKAPVIKTIMERPEKGLPSSIVNEGAAGRVSWFVDDDALKDVFVIKKKYKFYDDENLTE.

Positions 36 to 85 are disordered; the sequence is GKVSRSTQMSGTSLNGNGNTESKTMERVNSVRSNASSRGGSEDGATKKLK. Residues 39-57 show a composition bias toward polar residues; the sequence is SRSTQMSGTSLNGNGNTES. Positions 63–74 are enriched in low complexity; the sequence is VNSVRSNASSRG. 2 positions are modified to phosphoserine: Ser-65 and Ser-68. The span at 75 to 85 shows a compositional bias: basic and acidic residues; that stretch reads GSEDGATKKLK. Position 320 is a phosphothreonine (Thr-320).

It belongs to the glucosamine/galactosamine-6-phosphate isomerase family. 6-phosphogluconolactonase subfamily.

It localises to the cytoplasm. The protein resides in the nucleus. May be involved in regulation of tRNA subcellular distribution. The chain is 6-phosphogluconolactonase-like protein 1 (SOL1) from Saccharomyces cerevisiae (strain ATCC 204508 / S288c) (Baker's yeast).